Reading from the N-terminus, the 478-residue chain is Chromosomal replication initiator protein DnaA (478 aa).

The interval 1–90 (MSVELWQQCV…KRSSAPRAVQ (90 aa)) is domain I, interacts with DnaA modulators. The tract at residues 91–141 (PASPPPAVVQAAPVAIEEASAARTVDAQPVAPATVRTERSVQVEGGLKHTS) is domain II. The segment at 142-358 (YLNRAFTFEN…GALKRVIAHS (217 aa)) is domain III, AAA+ region. Residues G186, G188, K189, and T190 each contribute to the ATP site. Positions 359-478 (HFTNHPITIE…YKNLLRTLTT (120 aa)) are domain IV, binds dsDNA.

The protein belongs to the DnaA family. As to quaternary structure, oligomerizes as a right-handed, spiral filament on DNA at oriC.

It localises to the cytoplasm. Functionally, plays an essential role in the initiation and regulation of chromosomal replication. ATP-DnaA binds to the origin of replication (oriC) to initiate formation of the DNA replication initiation complex once per cell cycle. Binds the DnaA box (a 9 base pair repeat at the origin) and separates the double-stranded (ds)DNA. Forms a right-handed helical filament on oriC DNA; dsDNA binds to the exterior of the filament while single-stranded (ss)DNA is stabiized in the filament's interior. The ATP-DnaA-oriC complex binds and stabilizes one strand of the AT-rich DNA unwinding element (DUE), permitting loading of DNA polymerase. After initiation quickly degrades to an ADP-DnaA complex that is not apt for DNA replication. Binds acidic phospholipids. This is Chromosomal replication initiator protein DnaA from Azotobacter vinelandii (strain DJ / ATCC BAA-1303).